Reading from the N-terminus, the 144-residue chain is Transcription antitermination protein NusB (144 aa).

Belongs to the NusB family.

Involved in transcription antitermination. Required for transcription of ribosomal RNA (rRNA) genes. Binds specifically to the boxA antiterminator sequence of the ribosomal RNA (rrn) operons. This is Transcription antitermination protein NusB from Histophilus somni (strain 129Pt) (Haemophilus somnus).